The following is a 363-amino-acid chain: Protein RecA (363 aa).

78–85 (GPESGGKT) provides a ligand contact to ATP.

This sequence belongs to the RecA family.

It localises to the cytoplasm. In terms of biological role, can catalyze the hydrolysis of ATP in the presence of single-stranded DNA, the ATP-dependent uptake of single-stranded DNA by duplex DNA, and the ATP-dependent hybridization of homologous single-stranded DNAs. It interacts with LexA causing its activation and leading to its autocatalytic cleavage. Probably involved in base excision repair. Its function is as follows. Following severe irradiation (7 kGy of gamma irradiation) genomic DNA is fragmented. DNA is progressively degraded for the first 1.5 hours after IR, in a step promoted by RecA and counterbalanced by DNA Pol I and Pol III, followed by massive DNA synthesis and genome reassembly in the next hour. Optimal priming of DNA synthesis requires both RecA and RadA, Pol III initiates DNA synthesis while both Pol I and Pol III are required for its continuation. In the absence of RecA the majority of the chromosome is still reconstituted, via either single-strand annealing or non-homologous end joining. The protein is Protein RecA of Deinococcus radiodurans (strain ATCC 13939 / DSM 20539 / JCM 16871 / CCUG 27074 / LMG 4051 / NBRC 15346 / NCIMB 9279 / VKM B-1422 / R1).